Here is a 702-residue protein sequence, read N- to C-terminus: Dynein axonemal intermediate chain 1 (702 aa).

Residues 1–58 are disordered; that stretch reads MLPASSKMPHKQPPPPRKQSISMGRGARKRDEDSGTEVGEGTDEWVQSKATVKPPDQL. Residues Ser134 and Ser137 each carry the phosphoserine modification. WD repeat units lie at residues 383-423, 432-475, 540-580, 582-622, and 630-669; these read SSES…SQPS, KHTD…LVHT, AHNM…PMFI, DLNS…YEAI, and KKKNKLTHVQFNPIHPIIIVGDDRGHVTCLKLSPNLRKMP.

It belongs to the dynein intermediate chain family. Consists of at least two heavy chains and a number of intermediate and light chains. Interacts with BICD2. Interacts with CFAP45 and CFAP52. Interacts with CFAP53.

It is found in the cytoplasm. The protein localises to the cytoskeleton. The protein resides in the cilium axoneme. Its function is as follows. Part of the dynein complex of respiratory cilia. The chain is Dynein axonemal intermediate chain 1 (DNAI1) from Bos taurus (Bovine).